We begin with the raw amino-acid sequence, 126 residues long: Probable DNA-directed RNA polymerase II subunit RPB11 (126 aa).

The protein belongs to the archaeal Rpo11/eukaryotic RPB11/RPC19 RNA polymerase subunit family. Component of the RNA polymerase II (Pol II) complex consisting of 12 subunits.

The protein localises to the nucleus. In terms of biological role, DNA-dependent RNA polymerase catalyzes the transcription of DNA into RNA using the four ribonucleoside triphosphates as substrates. Component of RNA polymerase II which synthesizes mRNA precursors and many functional non-coding RNAs. Pol II is the central component of the basal RNA polymerase II transcription machinery. It is composed of mobile elements that move relative to each other. RPB11 is part of the core element with the central large cleft. This chain is Probable DNA-directed RNA polymerase II subunit RPB11, found in Plasmodium falciparum (isolate 3D7).